Here is a 252-residue protein sequence, read N- to C-terminus: Uridylate kinase (252 aa).

Lysine 24–glycine 27 lines the ATP pocket. The tract at residues glycine 32–glycine 37 is involved in allosteric activation by GTP. Glycine 66 serves as a coordination point for UMP. ATP contacts are provided by glycine 67 and arginine 71. Residues aspartate 86 and threonine 147–threonine 154 each bind UMP. Residues threonine 174, tyrosine 180, and aspartate 183 each coordinate ATP.

This sequence belongs to the UMP kinase family. Homohexamer.

The protein resides in the cytoplasm. The enzyme catalyses UMP + ATP = UDP + ADP. Its pathway is pyrimidine metabolism; CTP biosynthesis via de novo pathway; UDP from UMP (UMPK route): step 1/1. Allosterically activated by GTP. Inhibited by UTP. Catalyzes the reversible phosphorylation of UMP to UDP. This chain is Uridylate kinase, found in Alcanivorax borkumensis (strain ATCC 700651 / DSM 11573 / NCIMB 13689 / SK2).